We begin with the raw amino-acid sequence, 675 residues long: L-type lectin-domain containing receptor kinase IV.1 (675 aa).

Positions 1 to 22 (MFLKLLTIFFFFFFNLIFQSSS) are cleaved as a signal peptide. Over 23-291 (QSLNFAYNNG…EPKRISEFYK (269 aa)) the chain is Extracellular. The interval 25–261 (LNFAYNNGFN…SEHYILGWSF (237 aa)) is legume-lectin like. N-linked (GlcNAc...) asparagine glycans are attached at residues Asn-57, Asn-79, Asn-112, Asn-134, Asn-153, and Asn-186. A helical membrane pass occupies residues 292–312 (IGMPLISLFLIFSFIFLVCYI). The Cytoplasmic portion of the chain corresponds to 313–675 (VRRRRKFAEE…IADSQLSGGR (363 aa)). Residues 347 to 624 (FKEKGLLGTG…LHYLRGDAKL (278 aa)) enclose the Protein kinase domain. ATP contacts are provided by residues 353–361 (LGTGGFGSV) and Lys-376. Catalysis depends on Asp-472, which acts as the Proton acceptor.

It in the C-terminal section; belongs to the protein kinase superfamily. Ser/Thr protein kinase family. This sequence in the N-terminal section; belongs to the leguminous lectin family.

It localises to the membrane. The enzyme catalyses L-seryl-[protein] + ATP = O-phospho-L-seryl-[protein] + ADP + H(+). It carries out the reaction L-threonyl-[protein] + ATP = O-phospho-L-threonyl-[protein] + ADP + H(+). This Arabidopsis thaliana (Mouse-ear cress) protein is L-type lectin-domain containing receptor kinase IV.1 (LECRK41).